The following is a 322-amino-acid chain: Epiphycan (322 aa).

A signal peptide spans 1–19; it reads MKTLAGLVLGLVIFDAAVT. An O-linked (GalNAc...) threonine glycan is attached at Thr-60. Residue Ser-64 is glycosylated (O-linked (Xyl...) (dermatan sulfate) serine). Residues 64–101 are disordered; sequence SGNRELLTPPPQPEKAQEEEEEEESTPRLIDGSSPQEP. The O-linked (GalNAc...) serine glycan is linked to Ser-96. Positions 106-143 constitute an LRRNT domain; that stretch reads VLGPHTNEDFPTCLLCTCISTTVYCDDHELDAIPPLPK. Residues Cys-118 and Cys-130 are joined by a disulfide bond. LRR repeat units follow at residues 144–165, 168–189, 192–213, 238–258, and 259–280; these read NTAY…DFAS, DLKR…AFRK, QLRE…PTTL, DLHH…PLPE, and NLRA…TFCN. An intrachain disulfide couples Cys-279 to Cys-312. Residues Asn-283 and Asn-302 are each glycosylated (N-linked (GlcNAc...) asparagine). The stretch at 290 to 310 is one LRR 6 repeat; it reads ALEDIRLDGNPINLSKTPQAY.

Belongs to the small leucine-rich proteoglycan (SLRP) family. SLRP class III subfamily. In terms of processing, the O-linked polysaccharides on Thr-60 and Ser-96 are probably the mucin type linked to GalNAc. There is one glycosaminoglycan chain, known to be dermatan sulfate, and it is probably the O-glycosylation at Ser-64. As to expression, cartilage, ligament, and placenta.

The protein localises to the secreted. It localises to the extracellular space. Its subcellular location is the extracellular matrix. Functionally, may have a role in bone formation and also in establishing the ordered structure of cartilage through matrix organization. This chain is Epiphycan (EPYC), found in Homo sapiens (Human).